The following is a 283-amino-acid chain: Pantothenate synthetase (283 aa).

Residue 30 to 37 (MGNLHAGH) participates in ATP binding. H37 functions as the Proton donor in the catalytic mechanism. Q61 contributes to the (R)-pantoate binding site. Position 61 (Q61) interacts with beta-alanine. 149–152 (GQKD) serves as a coordination point for ATP. Q155 is a (R)-pantoate binding site. Residues V178 and 186–189 (LSSR) each bind ATP.

This sequence belongs to the pantothenate synthetase family. Homodimer.

It is found in the cytoplasm. It carries out the reaction (R)-pantoate + beta-alanine + ATP = (R)-pantothenate + AMP + diphosphate + H(+). It functions in the pathway cofactor biosynthesis; (R)-pantothenate biosynthesis; (R)-pantothenate from (R)-pantoate and beta-alanine: step 1/1. Its function is as follows. Catalyzes the condensation of pantoate with beta-alanine in an ATP-dependent reaction via a pantoyl-adenylate intermediate. The chain is Pantothenate synthetase from Hydrogenovibrio crunogenus (strain DSM 25203 / XCL-2) (Thiomicrospira crunogena).